The following is a 410-amino-acid chain: Ribose 1,5-bisphosphate phosphokinase PhnN (410 aa).

Positions 1–220 (MRYAVYLAPP…VWLLMAGSTS (220 aa)) are unknown. The interval 221-410 (MRTETGQLIY…SHCHQPITAL (190 aa)) is ribose 1,5-bisphosphokinase. An ATP-binding site is contributed by 233-240 (GPSGAGKD).

It in the C-terminal section; belongs to the ribose 1,5-bisphosphokinase family.

The enzyme catalyses alpha-D-ribose 1,5-bisphosphate + ATP = 5-phospho-alpha-D-ribose 1-diphosphate + ADP. It participates in metabolic intermediate biosynthesis; 5-phospho-alpha-D-ribose 1-diphosphate biosynthesis; 5-phospho-alpha-D-ribose 1-diphosphate from D-ribose 5-phosphate (route II): step 3/3. Catalyzes the phosphorylation of ribose 1,5-bisphosphate to 5-phospho-D-ribosyl alpha-1-diphosphate (PRPP). The protein is Ribose 1,5-bisphosphate phosphokinase PhnN (phnN) of Laribacter hongkongensis (strain HLHK9).